We begin with the raw amino-acid sequence, 433 residues long: 3-phosphoshikimate 1-carboxyvinyltransferase (433 aa).

3-phosphoshikimate-binding residues include Lys-22, Ser-23, and Arg-27. Lys-22 lines the phosphoenolpyruvate pocket. Residues Gly-94 and Arg-122 each contribute to the phosphoenolpyruvate site. Residues Ser-168, Ser-169, Gln-170, Ser-196, Asp-319, and Lys-346 each contribute to the 3-phosphoshikimate site. Gln-170 is a binding site for phosphoenolpyruvate. Asp-319 functions as the Proton acceptor in the catalytic mechanism. Residues Arg-350, Arg-394, and Lys-418 each contribute to the phosphoenolpyruvate site.

The protein belongs to the EPSP synthase family. Monomer.

It is found in the cytoplasm. It catalyses the reaction 3-phosphoshikimate + phosphoenolpyruvate = 5-O-(1-carboxyvinyl)-3-phosphoshikimate + phosphate. Its pathway is metabolic intermediate biosynthesis; chorismate biosynthesis; chorismate from D-erythrose 4-phosphate and phosphoenolpyruvate: step 6/7. Catalyzes the transfer of the enolpyruvyl moiety of phosphoenolpyruvate (PEP) to the 5-hydroxyl of shikimate-3-phosphate (S3P) to produce enolpyruvyl shikimate-3-phosphate and inorganic phosphate. This chain is 3-phosphoshikimate 1-carboxyvinyltransferase, found in Nitrosomonas eutropha (strain DSM 101675 / C91 / Nm57).